A 362-amino-acid polypeptide reads, in one-letter code: Forkhead box protein F (362 aa).

Residues 19–70 are disordered; that stretch reads LDSTAPNNSHRTIKAENYFNEDEEDYNENSHEDSEDSKEDSDGQGCRSRKRK. A compositionally biased stretch (acidic residues) spans 37–57; it reads FNEDEEDYNENSHEDSEDSKE. The fork-head DNA-binding region spans 72-169; the sequence is KPPFSYIALI…EENGFRRRPR (98 aa).

The protein resides in the nucleus. Functionally, transcription factor that is required for cell fate of coelomocytes which are non-muscle mesodermal cells. Acts in concert with, and by activating expression of, the homeodomain gene ceh-34. Binds to the sequence motif 5'-ATAAA[T/C]A-3'. In Caenorhabditis elegans, this protein is Forkhead box protein F.